We begin with the raw amino-acid sequence, 115 residues long: uncharacterized protein (115 aa).

This is an uncharacterized protein from Acidianus sp. F28 (AFV-2).